Reading from the N-terminus, the 125-residue chain is Large ribosomal subunit protein bL19 (125 aa).

The protein belongs to the bacterial ribosomal protein bL19 family.

In terms of biological role, this protein is located at the 30S-50S ribosomal subunit interface and may play a role in the structure and function of the aminoacyl-tRNA binding site. The polypeptide is Large ribosomal subunit protein bL19 (Ehrlichia ruminantium (strain Gardel)).